The following is a 353-amino-acid chain: 4-hydroxy-2-oxovalerate aldolase 2 (353 aa).

Residues Val-14–Ala-266 enclose the Pyruvate carboxyltransferase domain. Arg-22–Asp-23 is a binding site for substrate. Asp-23 is a Mn(2+) binding site. His-26 serves as the catalytic Proton acceptor. 2 residues coordinate substrate: Ser-176 and His-205. Positions 205 and 207 each coordinate Mn(2+). Position 296 (Tyr-296) interacts with substrate.

It belongs to the 4-hydroxy-2-oxovalerate aldolase family.

The enzyme catalyses (S)-4-hydroxy-2-oxopentanoate = acetaldehyde + pyruvate. This is 4-hydroxy-2-oxovalerate aldolase 2 from Mycobacterium sp. (strain JLS).